A 454-amino-acid polypeptide reads, in one-letter code: B-cell lymphoma 3 protein (454 aa).

The segment at 1-50 is disordered; it reads MPRCPAGAMDEGPVDLRTRPKAAGLPGAALPLRKRPLRAPSPEPAAPRGA. Over residues 21-31 the composition is skewed to low complexity; that stretch reads KAAGLPGAALP. The residue at position 41 (serine 41) is a Phosphoserine. ANK repeat units lie at residues 134–163, 171–200, 204–235, 241–270, 275–304, 308–337, and 338–367; these read DGDT…QGGR, LRQT…SPMA, HGQT…TLDL, DGLT…DIDA, SGRS…NVNA, SGSS…DSSL, and KNCH…RPAS. Residues 360 to 454 form a disordered region; the sequence is GKATRPASTS…VPPSPAPGGS (95 aa). Residues 365-381 are compositionally biased toward polar residues; it reads PASTSQPDPSPDRSANT. Serine 374 carries the phosphoserine modification. Positions 382–404 are enriched in low complexity; it reads SPESSSRLSSNGLLSASPSSSPS. Phosphoserine; by GSK3 is present on residues serine 402 and serine 406. Pro residues predominate over residues 405 to 418; the sequence is QSPPRDPPGFPMAP. Over residues 432 to 442 the composition is skewed to low complexity; it reads LPFAGVLRGPG. Residues 443 to 454 are compositionally biased toward pro residues; sequence RPVPPSPAPGGS.

Component of a complex consisting of the NF-kappa-B p52-p52 homodimer and BCL3. Component of a complex consisting of the NF-kappa-B p50-p50 homodimer and BCL3. Interacts with N4BP2, COPS5 and PIR. Interacts with CYLD. Post-translationally, polyubiquitinated. Ubiquitination via 'Lys-63'-linked ubiquitin chains is required for nuclear accumulation. Deubiquitinated by CYLD, which acts on 'Lys-63'-linked ubiquitin chains. Deubiquitination by CYLD prevents nuclear accumulation. Activated by phosphorylation.

Its subcellular location is the nucleus. It localises to the cytoplasm. It is found in the perinuclear region. In terms of biological role, contributes to the regulation of transcriptional activation of NF-kappa-B target genes. In the cytoplasm, inhibits the nuclear translocation of the NF-kappa-B p50 subunit. In the nucleus, acts as transcriptional activator that promotes transcription of NF-kappa-B target genes. Contributes to the regulation of cell proliferation. This is B-cell lymphoma 3 protein (BCL3) from Homo sapiens (Human).